The chain runs to 326 residues: Ornithine carbamoyltransferase (326 aa).

Residues 57 to 60 (STRT), Gln-84, Arg-108, and 135 to 138 (HPTQ) each bind carbamoyl phosphate. L-ornithine is bound by residues Asn-169, Asp-233, and 237 to 238 (SM). 275–276 (CL) provides a ligand contact to carbamoyl phosphate.

The protein belongs to the aspartate/ornithine carbamoyltransferase superfamily. OTCase family.

It localises to the cytoplasm. It carries out the reaction carbamoyl phosphate + L-ornithine = L-citrulline + phosphate + H(+). It functions in the pathway amino-acid biosynthesis; L-arginine biosynthesis; L-arginine from L-ornithine and carbamoyl phosphate: step 1/3. Its function is as follows. Reversibly catalyzes the transfer of the carbamoyl group from carbamoyl phosphate (CP) to the N(epsilon) atom of ornithine (ORN) to produce L-citrulline. In Escherichia coli O6:K15:H31 (strain 536 / UPEC), this protein is Ornithine carbamoyltransferase.